The chain runs to 319 residues: Ferrochelatase (319 aa).

2 residues coordinate Fe cation: His-193 and Glu-274.

The protein belongs to the ferrochelatase family.

Its subcellular location is the cytoplasm. It carries out the reaction heme b + 2 H(+) = protoporphyrin IX + Fe(2+). It participates in porphyrin-containing compound metabolism; protoheme biosynthesis; protoheme from protoporphyrin-IX: step 1/1. Its function is as follows. Catalyzes the ferrous insertion into protoporphyrin IX. The protein is Ferrochelatase of Erwinia tasmaniensis (strain DSM 17950 / CFBP 7177 / CIP 109463 / NCPPB 4357 / Et1/99).